The sequence spans 308 residues: Homoserine kinase (308 aa).

Position 95 to 105 (95 to 105 (PQSRGLGSSAA)) interacts with ATP.

Belongs to the GHMP kinase family. Homoserine kinase subfamily.

It is found in the cytoplasm. It carries out the reaction L-homoserine + ATP = O-phospho-L-homoserine + ADP + H(+). The protein operates within amino-acid biosynthesis; L-threonine biosynthesis; L-threonine from L-aspartate: step 4/5. Its function is as follows. Catalyzes the ATP-dependent phosphorylation of L-homoserine to L-homoserine phosphate. This Corynebacterium jeikeium (strain K411) protein is Homoserine kinase.